A 921-amino-acid polypeptide reads, in one-letter code: Inter-alpha-trypsin inhibitor heavy chain H4 (921 aa).

Residues Met1–Ala27 form the signal peptide. In terms of domain architecture, VIT spans His28–Glu146. Asn80, Asn205, and Asn242 each carry an N-linked (GlcNAc...) asparagine glycan. The 159-residue stretch at Pro270 to Glu428 folds into the VWFA domain. 2 N-linked (GlcNAc...) asparagine glycosylation sites follow: Asn513 and Asn577. Residues Lys591–Arg646 are disordered. Over residues Gly608–Phe623 the composition is skewed to polar residues. An O-linked (GalNAc...) threonine glycan is attached at Thr712. A disulfide bridge connects residues Cys738 and Cys916.

This sequence belongs to the ITIH family. As to quaternary structure, interacts (via C-terminus) with DNAJC1 (via SANT 2 domain). Post-translationally, appears to be both N- and O-glycosylated. Cleaved by plasma kallikrein to yield 55- and 25-kDa fragments. As to expression, liver specific.

Its subcellular location is the secreted. In terms of biological role, type II acute-phase protein (APP) involved in inflammatory responses to trauma. May also play a role in liver development or regeneration. The chain is Inter-alpha-trypsin inhibitor heavy chain H4 (ITIH4) from Sus scrofa (Pig).